The chain runs to 510 residues: Probable ADP-ribosylation factor-binding protein C1F3.05 (510 aa).

Residues A14–P150 enclose the VHS domain. A GAT domain is found at L177–L301. Residues T391–L510 form the GAE domain.

The protein resides in the golgi apparatus. It is found in the trans-Golgi network. May play a role in the regulation of membrane traffic through the trans-Golgi network. The protein is Probable ADP-ribosylation factor-binding protein C1F3.05 of Schizosaccharomyces pombe (strain 972 / ATCC 24843) (Fission yeast).